Consider the following 339-residue polypeptide: Adenylosuccinate synthetase (339 aa).

GTP is bound by residues 12 to 18 (GDEGKGS) and 42 to 44 (GHS). Residue Asp-13 is the Proton acceptor of the active site. Mg(2+) contacts are provided by Asp-13 and Gly-42. Residues 13–16 (DEGK), 40–43 (NAGH), Thr-127, Arg-141, Gln-179, Thr-194, and Arg-256 each bind IMP. Catalysis depends on His-43, which acts as the Proton donor. Position 252 to 258 (252 to 258 (TVTGRRR)) interacts with substrate. Residues Arg-258, 284-286 (MLD), and 324-326 (KTG) each bind GTP.

Belongs to the adenylosuccinate synthetase family. In terms of assembly, homodimer. Requires Mg(2+) as cofactor.

The protein resides in the cytoplasm. The catalysed reaction is IMP + L-aspartate + GTP = N(6)-(1,2-dicarboxyethyl)-AMP + GDP + phosphate + 2 H(+). The protein operates within purine metabolism; AMP biosynthesis via de novo pathway; AMP from IMP: step 1/2. Its function is as follows. Plays an important role in the de novo pathway of purine nucleotide biosynthesis. Catalyzes the first committed step in the biosynthesis of AMP from IMP. The polypeptide is Adenylosuccinate synthetase (Thermococcus onnurineus (strain NA1)).